The following is a 551-amino-acid chain: Probable 4-coumarate--CoA ligase 2 (551 aa).

ATP is bound by residues Ser-205, Ser-206, Gly-207, Thr-208, Thr-209, and Lys-213. (E)-4-coumaroyl-AMP is bound by residues Tyr-253 and Thr-257. CoA is bound at residue Lys-274. Residues 276-346 form an SBD1 region; the sequence is EFVRFLDLIQ…RFKGKLIIKQ (71 aa). Positions 323, 346, 347, and 351 each coordinate (E)-4-coumaroyl-AMP. ATP contacts are provided by Gln-346, Gly-347, Thr-351, Asp-430, and Arg-445. The segment at 347–409 is SBD2; it reads GYGATELSPA…IKGPNVMLGY (63 aa). (E)-4-coumaroyl-AMP is bound by residues Lys-447 and Lys-451. 2 residues coordinate CoA: Lys-453 and Gly-454. An ATP-binding site is contributed by Lys-537.

It belongs to the ATP-dependent AMP-binding enzyme family. It depends on Mg(2+) as a cofactor.

The catalysed reaction is (E)-4-coumarate + ATP + CoA = (E)-4-coumaroyl-CoA + AMP + diphosphate. The enzyme catalyses (E)-4-coumarate + ATP + H(+) = (E)-4-coumaroyl-AMP + diphosphate. It catalyses the reaction (E)-4-coumaroyl-AMP + CoA = (E)-4-coumaroyl-CoA + AMP + H(+). Its pathway is phytoalexin biosynthesis; 3,4',5-trihydroxystilbene biosynthesis; 3,4',5-trihydroxystilbene from trans-4-coumarate: step 1/2. Its function is as follows. Carboxylate--CoA ligase that may use 4-coumarate as substrate. Follows a two-step reaction mechanism, wherein the carboxylate substrate first undergoes adenylation by ATP, followed by a thioesterification in the presence of CoA to yield the final CoA thioester. In Dictyostelium discoideum (Social amoeba), this protein is Probable 4-coumarate--CoA ligase 2 (4cl2).